A 374-amino-acid chain; its full sequence is Probable dual-specificity RNA methyltransferase RlmN (374 aa).

Over residues 1 to 17 (MEKNEISEERRTQEKEK) the composition is skewed to basic and acidic residues. A disordered region spans residues 1–22 (MEKNEISEERRTQEKEKQHGHR). Glu-119 functions as the Proton acceptor in the catalytic mechanism. The 236-residue stretch at 125–360 (SEERITACIS…VTVRKSQGAT (236 aa)) folds into the Radical SAM core domain. A disulfide bridge connects residues Cys-132 and Cys-365. [4Fe-4S] cluster-binding residues include Cys-139, Cys-143, and Cys-146. S-adenosyl-L-methionine contacts are provided by residues 190 to 191 (GE), Ser-223, 246 to 248 (SLH), and Asn-322. Cys-365 serves as the catalytic S-methylcysteine intermediate.

The protein belongs to the radical SAM superfamily. RlmN family. [4Fe-4S] cluster is required as a cofactor.

It localises to the cytoplasm. It catalyses the reaction adenosine(2503) in 23S rRNA + 2 reduced [2Fe-2S]-[ferredoxin] + 2 S-adenosyl-L-methionine = 2-methyladenosine(2503) in 23S rRNA + 5'-deoxyadenosine + L-methionine + 2 oxidized [2Fe-2S]-[ferredoxin] + S-adenosyl-L-homocysteine. The enzyme catalyses adenosine(37) in tRNA + 2 reduced [2Fe-2S]-[ferredoxin] + 2 S-adenosyl-L-methionine = 2-methyladenosine(37) in tRNA + 5'-deoxyadenosine + L-methionine + 2 oxidized [2Fe-2S]-[ferredoxin] + S-adenosyl-L-homocysteine. Functionally, specifically methylates position 2 of adenine 2503 in 23S rRNA and position 2 of adenine 37 in tRNAs. In Chlorobaculum tepidum (strain ATCC 49652 / DSM 12025 / NBRC 103806 / TLS) (Chlorobium tepidum), this protein is Probable dual-specificity RNA methyltransferase RlmN.